We begin with the raw amino-acid sequence, 356 residues long: ATP-dependent 6-phosphofructokinase (356 aa).

Residues G15, 78–79, and 115–118 contribute to the ATP site; these read KG and GEGT. Position 116 (E116) interacts with Mg(2+). Substrate is bound by residues 138-140, R175, 182-184, E235, R272, and 278-281; these read TID, MGR, and HLQR. D140 serves as the catalytic Proton acceptor.

This sequence belongs to the phosphofructokinase type A (PFKA) family. Mixed-substrate PFK group III subfamily. In terms of assembly, homodimer or homotetramer. Mg(2+) is required as a cofactor.

The protein localises to the cytoplasm. The catalysed reaction is beta-D-fructose 6-phosphate + ATP = beta-D-fructose 1,6-bisphosphate + ADP + H(+). The protein operates within carbohydrate degradation; glycolysis; D-glyceraldehyde 3-phosphate and glycerone phosphate from D-glucose: step 3/4. In terms of biological role, catalyzes the phosphorylation of D-fructose 6-phosphate to fructose 1,6-bisphosphate by ATP, the first committing step of glycolysis. In Chloroflexus aurantiacus (strain ATCC 29366 / DSM 635 / J-10-fl), this protein is ATP-dependent 6-phosphofructokinase.